The chain runs to 468 residues: Tyrosine-protein phosphatase YopH (468 aa).

Positions 127–194 (ARGHVSSHSH…TVSPYGPEAR (68 aa)) are disordered. A compositionally biased stretch (low complexity) spans 130–141 (HVSSHSHSALHA). The Tyrosine-protein phosphatase domain maps to 152–461 (SHLDPRTPPL…DVLIKLAEGQ (310 aa)). Cys-403 functions as the Phosphocysteine intermediate in the catalytic mechanism.

The protein belongs to the protein-tyrosine phosphatase family. Non-receptor class subfamily.

The protein localises to the secreted. The enzyme catalyses O-phospho-L-tyrosyl-[protein] + H2O = L-tyrosyl-[protein] + phosphate. Its function is as follows. Essential virulence determinant. This protein is a protein tyrosine phosphatase. The essential function of YopH in Yersinia pathogenesis is host-protein dephosphorylation. It contributes to the ability of the bacteria to resist phagocytosis by peritoneal macrophages. This is Tyrosine-protein phosphatase YopH (yopH) from Yersinia pseudotuberculosis serotype I (strain IP32953).